The sequence spans 214 residues: Octanoyltransferase (214 aa).

In terms of domain architecture, BPL/LPL catalytic spans 32–207; sequence EDTLDEIWLV…NLLALLNHPP (176 aa). Residues 71-78, 138-140, and 151-153 each bind substrate; these read RGGQVTYH, SLG, and GLA. Residue Cys-169 is the Acyl-thioester intermediate of the active site.

The protein belongs to the LipB family.

The protein localises to the cytoplasm. It catalyses the reaction octanoyl-[ACP] + L-lysyl-[protein] = N(6)-octanoyl-L-lysyl-[protein] + holo-[ACP] + H(+). It participates in protein modification; protein lipoylation via endogenous pathway; protein N(6)-(lipoyl)lysine from octanoyl-[acyl-carrier-protein]: step 1/2. Functionally, catalyzes the transfer of endogenously produced octanoic acid from octanoyl-acyl-carrier-protein onto the lipoyl domains of lipoate-dependent enzymes. Lipoyl-ACP can also act as a substrate although octanoyl-ACP is likely to be the physiological substrate. This is Octanoyltransferase from Klebsiella pneumoniae subsp. pneumoniae (strain ATCC 700721 / MGH 78578).